Consider the following 179-residue polypeptide: Large ribosomal subunit protein uL5 (179 aa).

This sequence belongs to the universal ribosomal protein uL5 family. Part of the 50S ribosomal subunit; part of the 5S rRNA/L5/L18/L25 subcomplex. Contacts the 5S rRNA and the P site tRNA. Forms a bridge to the 30S subunit in the 70S ribosome.

This is one of the proteins that bind and probably mediate the attachment of the 5S RNA into the large ribosomal subunit, where it forms part of the central protuberance. In the 70S ribosome it contacts protein S13 of the 30S subunit (bridge B1b), connecting the 2 subunits; this bridge is implicated in subunit movement. Contacts the P site tRNA; the 5S rRNA and some of its associated proteins might help stabilize positioning of ribosome-bound tRNAs. The polypeptide is Large ribosomal subunit protein uL5 (Bacillus cereus (strain G9842)).